The sequence spans 371 residues: E3 ubiquitin-protein ligase RHF1A (371 aa).

An RING-type; atypical zinc finger spans residues 46–87 (CSICLEPFTLQDPSTVTSCKHEYHLQCIIEWSQRSKECPICW). 2 disordered regions span residues 199 to 254 (HQNS…SSLP) and 348 to 371 (EANS…GETC). The segment covering 200 to 225 (QNSNPCPSPGSMTPSPVSGHSSIPAD) has biased composition (polar residues). The segment covering 226 to 252 (SNNGSRISPGPSPSRSSQSPKSPEASS) has biased composition (low complexity).

As to quaternary structure, interacts with KRP6. As to expression, expressed in stems, flowers, green siliques, cauline leaves, seeds and roots.

The enzyme catalyses S-ubiquitinyl-[E2 ubiquitin-conjugating enzyme]-L-cysteine + [acceptor protein]-L-lysine = [E2 ubiquitin-conjugating enzyme]-L-cysteine + N(6)-ubiquitinyl-[acceptor protein]-L-lysine.. It participates in protein modification; protein ubiquitination. Functionally, E3 ubiquitin-protein ligase involved in the positive regulation of the gametogenesis progression. Mediates the proteasomal degradation of KRP6, a cyclin-dependent kinase inhibitor which accumulates during meiosis and blocks the progression of subsequent mitoses during gametophyte development. Functions in association with RHF2A. Possesses E3 ubiquitin-protein ligase activity when associated with the E2 enzyme UBC8 in vitro. This chain is E3 ubiquitin-protein ligase RHF1A, found in Arabidopsis thaliana (Mouse-ear cress).